The sequence spans 64 residues: Conotoxin Im11.1 (64 aa).

Residues 1 to 26 (MMFRLTSVSCFLLVIACLNLVVLTNA) form the signal peptide. Cystine bridges form between cysteine 27–cysteine 41, cysteine 34–cysteine 46, cysteine 40–cysteine 50, and cysteine 45–cysteine 54. Asparagine amide is present on asparagine 57. The propeptide occupies 61–64 (ATFQ).

Belongs to the conotoxin I2 superfamily. As to expression, expressed by the venom duct.

Its subcellular location is the secreted. The sequence is that of Conotoxin Im11.1 from Conus imperialis (Imperial cone).